The following is a 202-amino-acid chain: uncharacterized protein (202 aa).

An HTH tetR-type domain is found at Glu13 to Leu73. The segment at residues Gly36 to Phe55 is a DNA-binding region (H-T-H motif).

This is an uncharacterized protein from Mycobacterium tuberculosis (strain CDC 1551 / Oshkosh).